Reading from the N-terminus, the 318-residue chain is L-lactate dehydrogenase (318 aa).

NAD(+) contacts are provided by residues Val18, Asp39, Lys44, Tyr69, and 83–84 (GA). The substrate site is built by Gln86 and Arg92. NAD(+)-binding positions include Ser105, 122–124 (VSN), and Ser147. Residue 124–127 (NPVD) participates in substrate binding. Residue 152-155 (DTSR) coordinates substrate. The active-site Proton acceptor is His179. Residue Tyr225 is modified to Phosphotyrosine. Residue Thr234 participates in substrate binding.

This sequence belongs to the LDH/MDH superfamily. LDH family. In terms of assembly, homotetramer.

The protein localises to the cytoplasm. The enzyme catalyses (S)-lactate + NAD(+) = pyruvate + NADH + H(+). It functions in the pathway fermentation; pyruvate fermentation to lactate; (S)-lactate from pyruvate: step 1/1. Its function is as follows. Catalyzes the conversion of lactate to pyruvate. This chain is L-lactate dehydrogenase, found in Clostridium botulinum (strain Kyoto / Type A2).